We begin with the raw amino-acid sequence, 504 residues long: Maturase K (504 aa).

Belongs to the intron maturase 2 family. MatK subfamily.

Its subcellular location is the plastid. It localises to the chloroplast. Its function is as follows. Usually encoded in the trnK tRNA gene intron. Probably assists in splicing its own and other chloroplast group II introns. The protein is Maturase K of Vigna unguiculata (Cowpea).